We begin with the raw amino-acid sequence, 391 residues long: 1-deoxy-D-xylulose 5-phosphate reductoisomerase (391 aa).

Thr-11, Gly-12, Ser-13, Ile-14, Gly-37, Asn-39, and Asn-125 together coordinate NADPH. Lys-126 is a binding site for 1-deoxy-D-xylulose 5-phosphate. Position 127 (Glu-127) interacts with NADPH. Mn(2+) is bound at residue Asp-151. 1-deoxy-D-xylulose 5-phosphate is bound by residues Ser-152, Glu-153, Ser-176, and His-199. Glu-153 contributes to the Mn(2+) binding site. Position 205 (Gly-205) interacts with NADPH. 1-deoxy-D-xylulose 5-phosphate contacts are provided by Ser-212, Asn-217, Lys-218, and Glu-221. Residue Glu-221 coordinates Mn(2+).

Belongs to the DXR family. It depends on Mg(2+) as a cofactor. Mn(2+) is required as a cofactor.

It catalyses the reaction 2-C-methyl-D-erythritol 4-phosphate + NADP(+) = 1-deoxy-D-xylulose 5-phosphate + NADPH + H(+). It functions in the pathway isoprenoid biosynthesis; isopentenyl diphosphate biosynthesis via DXP pathway; isopentenyl diphosphate from 1-deoxy-D-xylulose 5-phosphate: step 1/6. Its function is as follows. Catalyzes the NADPH-dependent rearrangement and reduction of 1-deoxy-D-xylulose-5-phosphate (DXP) to 2-C-methyl-D-erythritol 4-phosphate (MEP). In Heliobacterium modesticaldum (strain ATCC 51547 / Ice1), this protein is 1-deoxy-D-xylulose 5-phosphate reductoisomerase.